A 594-amino-acid polypeptide reads, in one-letter code: UvrABC system protein C (594 aa).

A GIY-YIG domain is found at 14-91 (DSPGCYLHKD…IQENMPKYNI (78 aa)). The region spanning 196 to 231 (DKIIDDLRSKMLEASHNQEFERAAEYRDLISGIATM) is the UVR domain.

Belongs to the UvrC family. In terms of assembly, interacts with UvrB in an incision complex.

It localises to the cytoplasm. Its function is as follows. The UvrABC repair system catalyzes the recognition and processing of DNA lesions. UvrC both incises the 5' and 3' sides of the lesion. The N-terminal half is responsible for the 3' incision and the C-terminal half is responsible for the 5' incision. This is UvrABC system protein C from Streptococcus equi subsp. equi (strain 4047).